A 419-amino-acid polypeptide reads, in one-letter code: CDP-diacylglycerol--serine O-phosphatidyltransferase 3 (419 aa).

A disordered region spans residues 1 to 51; sequence MPVRRRWYPPSSTAAQPSPDGGDVNTDDADACPSSRQQRPPSLPQHSAPIH. Residues 33–47 show a composition bias toward low complexity; that stretch reads PSSRQQRPPSLPQHS. The next 7 helical transmembrane spans lie at 103–123, 142–162, 168–188, 260–280, 287–307, 359–379, and 384–404; these read PHTVSVLLAGACLLIWASGVL, WAMIAVFLAYCTLQAPSTILI, VWRLVHGMAVVYLVALTFLLF, LLLWVLSVGFELMELTFRHML, WWDSIILDIMICNWFGIWAGM, FIQVFCLCVGFMTVELNTFFL, and WIPPRNPLVVYRLILWWLIAI.

The protein belongs to the CDP-alcohol phosphatidyltransferase class-I family.

It is found in the endoplasmic reticulum membrane. The enzyme catalyses a CDP-1,2-diacyl-sn-glycerol + L-serine = a 1,2-diacyl-sn-glycero-3-phospho-L-serine + CMP + H(+). It functions in the pathway phospholipid metabolism; phosphatidylethanolamine biosynthesis; phosphatidylethanolamine from CDP-diacylglycerol: step 1/2. In terms of biological role, catalyzes a base-exchange reaction in which the polar head group of phosphatidylethanolamine (PE) or phosphatidylcholine (PC) is replaced by L-serine. This Oryza sativa subsp. japonica (Rice) protein is CDP-diacylglycerol--serine O-phosphatidyltransferase 3 (PSS3).